Reading from the N-terminus, the 484-residue chain is Bifunctional protein GlmU (484 aa).

The interval 1–240 (MSASRPAAVM…RTEVEGVNDR (240 aa)) is pyrophosphorylase. UDP-N-acetyl-alpha-D-glucosamine contacts are provided by residues 12–15 (LAAG), K26, Q79, and 84–85 (GT). D113 serves as a coordination point for Mg(2+). Residues G150, E165, N180, and N238 each contribute to the UDP-N-acetyl-alpha-D-glucosamine site. N238 is a binding site for Mg(2+). A linker region spans residues 241 to 261 (VQLAEARRLLNARLLEQLMRD). The tract at residues 262–484 (GVTVVDPAST…RARARSEEDR (223 aa)) is N-acetyltransferase. UDP-N-acetyl-alpha-D-glucosamine-binding residues include R343 and K361. The Proton acceptor role is filled by H373. 2 residues coordinate UDP-N-acetyl-alpha-D-glucosamine: Y376 and N387. Acetyl-CoA contacts are provided by residues A390, 396–397 (NY), S415, and A433. The tract at residues 457 to 484 (EGWVERKRPGTPAAQAAERARARSEEDR) is disordered. Positions 474 to 484 (ERARARSEEDR) are enriched in basic and acidic residues.

This sequence in the N-terminal section; belongs to the N-acetylglucosamine-1-phosphate uridyltransferase family. In the C-terminal section; belongs to the transferase hexapeptide repeat family. In terms of assembly, homotrimer. Mg(2+) is required as a cofactor.

It is found in the cytoplasm. It catalyses the reaction alpha-D-glucosamine 1-phosphate + acetyl-CoA = N-acetyl-alpha-D-glucosamine 1-phosphate + CoA + H(+). It carries out the reaction N-acetyl-alpha-D-glucosamine 1-phosphate + UTP + H(+) = UDP-N-acetyl-alpha-D-glucosamine + diphosphate. The protein operates within nucleotide-sugar biosynthesis; UDP-N-acetyl-alpha-D-glucosamine biosynthesis; N-acetyl-alpha-D-glucosamine 1-phosphate from alpha-D-glucosamine 6-phosphate (route II): step 2/2. Its pathway is nucleotide-sugar biosynthesis; UDP-N-acetyl-alpha-D-glucosamine biosynthesis; UDP-N-acetyl-alpha-D-glucosamine from N-acetyl-alpha-D-glucosamine 1-phosphate: step 1/1. It participates in bacterial outer membrane biogenesis; LPS lipid A biosynthesis. Functionally, catalyzes the last two sequential reactions in the de novo biosynthetic pathway for UDP-N-acetylglucosamine (UDP-GlcNAc). The C-terminal domain catalyzes the transfer of acetyl group from acetyl coenzyme A to glucosamine-1-phosphate (GlcN-1-P) to produce N-acetylglucosamine-1-phosphate (GlcNAc-1-P), which is converted into UDP-GlcNAc by the transfer of uridine 5-monophosphate (from uridine 5-triphosphate), a reaction catalyzed by the N-terminal domain. This chain is Bifunctional protein GlmU, found in Thermobifida fusca (strain YX).